An 89-amino-acid chain; its full sequence is Large ribosomal subunit protein bL27 (89 aa).

The tract at residues 1–26 (MATKKAGGSSKNGRDSAGRRLGLKKS) is disordered.

Belongs to the bacterial ribosomal protein bL27 family.

This is Large ribosomal subunit protein bL27 from Orientia tsutsugamushi (strain Ikeda) (Rickettsia tsutsugamushi).